The chain runs to 116 residues: Large ribosomal subunit protein uL18 (116 aa).

It belongs to the universal ribosomal protein uL18 family. In terms of assembly, part of the 50S ribosomal subunit; part of the 5S rRNA/L5/L18/L25 subcomplex. Contacts the 5S and 23S rRNAs.

This is one of the proteins that bind and probably mediate the attachment of the 5S RNA into the large ribosomal subunit, where it forms part of the central protuberance. In Azotobacter vinelandii (strain DJ / ATCC BAA-1303), this protein is Large ribosomal subunit protein uL18.